Here is a 310-residue protein sequence, read N- to C-terminus: tRNA dimethylallyltransferase (310 aa).

24 to 31 (GPTASGKT) provides a ligand contact to ATP. 26-31 (TASGKT) is a binding site for substrate. The segment at 49–52 (DSRQ) is interaction with substrate tRNA.

It belongs to the IPP transferase family. Monomer. The cofactor is Mg(2+).

The enzyme catalyses adenosine(37) in tRNA + dimethylallyl diphosphate = N(6)-dimethylallyladenosine(37) in tRNA + diphosphate. Its function is as follows. Catalyzes the transfer of a dimethylallyl group onto the adenine at position 37 in tRNAs that read codons beginning with uridine, leading to the formation of N6-(dimethylallyl)adenosine (i(6)A). The polypeptide is tRNA dimethylallyltransferase (Synechococcus sp. (strain CC9311)).